Here is a 285-residue protein sequence, read N- to C-terminus: uncharacterized protein (285 aa).

Substrate is bound at residue S168. Y181 (proton acceptor) is an active-site residue.

It belongs to the short-chain dehydrogenases/reductases (SDR) family.

This is an uncharacterized protein from Haemophilus influenzae (strain ATCC 51907 / DSM 11121 / KW20 / Rd).